The chain runs to 685 residues: uncharacterized protein (685 aa).

2 disordered regions span residues 502–538 (NLNQ…SLNK) and 635–685 (RSKR…IHNA). The span at 518–538 (SSENMTKFPSSRGKSTVSLNK) shows a compositional bias: polar residues. Positions 675–685 (KLKKSLIIHNA) are enriched in basic residues.

This is an uncharacterized protein from Homo sapiens (Human).